Reading from the N-terminus, the 180-residue chain is ATP-dependent protease subunit HslV (180 aa).

T7 is an active-site residue. The Na(+) site is built by A165, C168, and T171.

The protein belongs to the peptidase T1B family. HslV subfamily. As to quaternary structure, a double ring-shaped homohexamer of HslV is capped on each side by a ring-shaped HslU homohexamer. The assembly of the HslU/HslV complex is dependent on binding of ATP.

The protein localises to the cytoplasm. It carries out the reaction ATP-dependent cleavage of peptide bonds with broad specificity.. With respect to regulation, allosterically activated by HslU binding. Functionally, protease subunit of a proteasome-like degradation complex believed to be a general protein degrading machinery. The protein is ATP-dependent protease subunit HslV of Geobacillus kaustophilus (strain HTA426).